The chain runs to 172 residues: Large ribosomal subunit protein eL20 (172 aa).

The protein belongs to the eukaryotic ribosomal protein eL20 family. In terms of assembly, component of the large ribosomal subunit. Mature ribosomes consist of a small (40S) and a large (60S) subunit. The 40S subunit contains about 32 different proteins and 1 molecule of RNA (18S). The 60S subunit contains 45 different proteins and 3 molecules of RNA (25S, 5.8S and 5S).

The protein resides in the cytoplasm. Its function is as follows. Component of the ribosome, a large ribonucleoprotein complex responsible for the synthesis of proteins in the cell. The small ribosomal subunit (SSU) binds messenger RNAs (mRNAs) and translates the encoded message by selecting cognate aminoacyl-transfer RNA (tRNA) molecules. The large subunit (LSU) contains the ribosomal catalytic site termed the peptidyl transferase center (PTC), which catalyzes the formation of peptide bonds, thereby polymerizing the amino acids delivered by tRNAs into a polypeptide chain. The nascent polypeptides leave the ribosome through a tunnel in the LSU and interact with protein factors that function in enzymatic processing, targeting, and the membrane insertion of nascent chains at the exit of the ribosomal tunnel. The protein is Large ribosomal subunit protein eL20 of Candida albicans (strain SC5314 / ATCC MYA-2876) (Yeast).